Consider the following 120-residue polypeptide: Putative cysteine proteinase inhibitor 11 (120 aa).

Residues 1-24 (MARHPGLLLILLAAVAAVATTSRA) form the signal peptide. A Secondary area of contact motif is present at residues 73–77 (QVVQG).

It belongs to the cystatin family. Phytocystatin subfamily.

The protein resides in the secreted. Its function is as follows. Specific inhibitor of cysteine proteinases. Probably involved in the regulation of endogenous processes and in defense against pests and pathogens. The polypeptide is Putative cysteine proteinase inhibitor 11 (Oryza sativa subsp. japonica (Rice)).